The primary structure comprises 248 residues: NAD-dependent protein deacylase 2 (248 aa).

A Deacetylase sirtuin-type domain is found at 1-248 (MLQAASALRH…HVMAELISHI (248 aa)). NAD(+) is bound by residues 19 to 38 (GAGLSADSGLPTYRGVGGLY) and 102 to 105 (QNVD). The active-site Proton acceptor is H122. The Zn(2+) site is built by C130, C133, C152, and C155. NAD(+) is bound by residues 193–195 (GTT), 219–221 (NPQ), and A237.

It belongs to the sirtuin family. Class III subfamily. Zn(2+) is required as a cofactor.

It localises to the cytoplasm. It carries out the reaction N(6)-acetyl-L-lysyl-[protein] + NAD(+) + H2O = 2''-O-acetyl-ADP-D-ribose + nicotinamide + L-lysyl-[protein]. Functionally, NAD-dependent protein deacetylase which modulates the activities of several proteins which are inactive in their acetylated form. The protein is NAD-dependent protein deacylase 2 (cobB2) of Pseudomonas syringae pv. tomato (strain ATCC BAA-871 / DC3000).